We begin with the raw amino-acid sequence, 7094 residues long: Replicase polyprotein 1ab (7094 aa).

Residues 54–196 enclose the CoV Nsp1 globular domain; that stretch reads PENHVMVDCR…PWVMYLRKCG (143 aa). The BetaCoV Nsp1 C-terminal domain occupies 216 to 246; sequence FKVEDAYDLVHDEPKGKFSKKAYALIRGYRG. In terms of domain architecture, CoV Nsp2 N-terminal spans 250–519; it reads LLYVDQYGCD…LICKALYLDY (270 aa). 4 residues coordinate Zn(2+): C392, C397, C413, and C416. The tract at residues 392–416 is C4; the sequence is CEQDLCDFKGWVPGNMIDGFACTTC. Residues 524–713 enclose the CoV Nsp2 middle domain; the sequence is CGNLHQRELL…AQAFRSVAKV (190 aa). Positions 733–851 constitute a CoV Nsp2 C-terminal domain; sequence RRRICLSGSK…LDQAWRVPCA (119 aa). Positions 853-966 constitute a Ubiquitin-like 1 domain; the sequence is RRVTFKEQPT…LYCAFTAPED (114 aa). A Peptidase C16 1 domain is found at 1036-1274; it reads DLESVIQDYE…IAQLYGSCIT (239 aa). The active-site For PL1-PRO activity is the C1074. 4 residues coordinate Zn(2+): C1151, C1154, C1177, and C1179. The segment at 1151 to 1179 adopts a C4-type 1 zinc-finger fold; it reads CIKCDLALKLKGLDAMFFYGDVVSHVCKC. Catalysis depends on for PL1-PRO activity residues H1225 and D1236. Residues 1275 to 1435 form the Macro domain; the sequence is PNVCFVKGDI…LISKCQITAV (161 aa). The region spanning 1491–1563 is the DPUP domain; it reads DDARTFVQSN…VAQIKALFLD (73 aa). In terms of domain architecture, Ubiquitin-like 2 spans 1562–1617; that stretch reads LDKVDILLTVDGVNFTNRFVPVGESFGKSLGNVFCDGVNVTKHKCDINYKGKVFFQ. One can recognise a Peptidase C16 2 domain in the interval 1631–1892; the sequence is SSFNFDQKEL…KIEYNPDLSQ (262 aa). Residue C1671 is the For PL2-PRO activity of the active site. Residues C1749, C1751, C1783, and C1785 each coordinate Zn(2+). The C4-type 2 zinc-finger motif lies at 1749 to 1785; it reads CKCGVKQEQRTGVDAVMHFGTLSREDLEIGYTVDCSC. Active-site for PL2-PRO activity residues include H1828 and D1842. Residues 1906-2007 form the Nucleic acid-binding domain; that stretch reads IKAQFKTFEK…TYFNRPLLVD (102 aa). Residues 2020–2169 form the G2M domain; that stretch reads DDGGDISESD…ADNKVIYTTE (150 aa). Helical transmembrane passes span 2138 to 2158, 2199 to 2219, and 2227 to 2247; these read ISAC…WIKI, ACII…NVIF, and IGFL…TFSL. An HD1 region spans residues 2138-2385; that stretch reads ISACFNFIKW…ASFIKLFILF (248 aa). The 62-residue stretch at 2235 to 2296 folds into the 3Ecto domain; sequence GKIAQWIKST…AIDVVQYEAD (62 aa). 2 cysteine pairs are disulfide-bonded: C2251-C2275 and C2266-C2272. 3 helical membrane-spanning segments follow: residues 2313 to 2333, 2343 to 2363, and 2365 to 2385; these read LIVS…LISI, LFML…ANML, and AHVF…FILF. The interval 2383–2473 is Y1; that stretch reads ILFRHVAYGC…ELKRPIQPTD (91 aa). A CoV Nsp3 Y domain is found at 2383–2750; it reads ILFRHVAYGC…LTTPFSLKGG (368 aa). 8 residues coordinate Zn(2+): H2387, C2392, C2397, C2400, C2433, H2436, C2440, and C2443. Residues 2387 to 2400 are ZF1; sequence HVAYGCSKPGCLFC. The interval 2433–2443 is ZF2; the sequence is CSKHQWNCIDC. A Y2 region spans residues 2474–2566; the sequence is VAYHTVTDVK…MVDKNLITTA (93 aa). A coV-Y region spans residues 2474–2750; the sequence is VAYHTVTDVK…LTTPFSLKGG (277 aa). The tract at residues 2567-2649 is Y3; it reads NTGTSVTETM…DSVMSAVSAG (83 aa). Positions 2650 to 2750 are Y4; the sequence is LELTDESCNN…LTTPFSLKGG (101 aa). The next 7 helical transmembrane spans lie at 2752-2772, 2824-2844, 3009-3029, 3031-3051, 3063-3083, 3090-3110, and 3115-3135; these read VFSY…IGLW, STFG…VAVV, VFDL…FLAL, ASSI…YYLI, IVFV…VFQV, VYAI…SVIM, and LVMY…SVVV. Residues 2752–3135 are HD2; that stretch reads VFSYFVYVCF…FCLLYISVVV (384 aa). The region spanning 3149–3246 is the Nsp4C domain; the sequence is LGTSVRSDGT…TASVSTSFLQ (98 aa). A Peptidase C30 domain is found at 3247-3549; sequence SGIVKMVNPT…YQQLAGIKLQ (303 aa). Catalysis depends on for 3CL-PRO activity residues H3287 and C3391. 7 consecutive transmembrane segments (helical) span residues 3558–3578, 3588–3608, 3614–3634, 3657–3677, 3684–3704, 3711–3731, and 3755–3775; these read GIVC…TAFV, TNML…MLLV, YLTM…YLVV, TYTD…FVTL, LFSF…WYMG, ILLM…LSMA, and IVLV…GLFS. Residues 3558–3775 are HD3; the sequence is GIVCWIMAST…IISCYWGLFS (218 aa). Residues 3837–3925 enclose the RdRp Nsp7 cofactor domain; sequence SKLTDVKCAN…DYAKDNTVLQ (89 aa). Residues 3926-4122 enclose the RdRp Nsp8 cofactor domain; that stretch reads ALQSEFVNMA…HNEVSATVLQ (197 aa). Residues 4123-4232 form the Nsp9 ssRNA-binding domain; that stretch reads NNELMPAKLK…GTISSTVRLQ (110 aa). An ExoN/MTase coactivator domain is found at 4233 to 4370; sequence AGTATEYASN…CVSTDTTVQS (138 aa). Zn(2+) is bound by residues C4306, C4309, H4315, C4322, C4348, C4351, C4359, and C4361. 2 zinc fingers span residues 4306–4322 and 4348–4361; these read CIYC…DGLC and CQVC…SCSC. One can recognise a NiRAN domain in the interval 4375–4630; sequence FLNRVRGTSV…DCELYVNNAY (256 aa). N4578 and D4587 together coordinate Mn(2+). The Nsp12 Interface domain occupies 4631 to 4729; sequence RLFDLVQYDF…MNMDVDTHRY (99 aa). Zn(2+) is bound by residues H4660, C4666, C4671, C4675, and C4852. Residues 4730–5297 form the Nsp12 RNA-dependent RNA polymerase domain; the sequence is RLSLKDLLLY…NMYLRSAVMQ (568 aa). Residues 4732-4946 are rdRp Fingers N-ter; that stretch reads SLKDLLLYAA…HQKCLKSIAA (215 aa). The rdRp Palm N-ter stretch occupies residues 4947–4985; the sequence is TRGVPVVIGTTKFYGGWDDMLRRLIKDVDNPVLMGWDYP. In terms of domain architecture, RdRp catalytic spans 4977–5139; the sequence is PVLMGWDYPK…CYNSDYASKG (163 aa). The segment at 4986–5044 is rdRp Fingers C-ter; sequence KCDRAMPNILRIVSSLVLARKHEACCSQSDRFYRLANECAQVLSEIVMCGGCYYVKPGG. Residues H5007, C5010, and C5011 each contribute to the Zn(2+) site. Positions 5045–5180 are rdRp Palm C-ter; sequence TSSGDATTAF…NNGPHEFCSQ (136 aa). Active-site residues include S5124, D5125, and D5126. Residues 5181–5297 form a rdRp Thumb region; the sequence is HTMLVKMDGD…NMYLRSAVMQ (117 aa). The CV ZBD domain maps to 5298–5410; it reads SVGACVVCSS…DDFNRIASCK (113 aa). Residues C5302, C5305, C5313, C5316, C5323, C5326, H5330, H5336, C5347, C5352, C5369, and H5372 each coordinate Zn(2+). The (+)RNA virus helicase ATP-binding domain maps to 5553–5734; it reads SVLETFQNNV…MCCLGPDIFL (182 aa). Residue 5578–5585 coordinates ATP; sequence GPPGTGKS. The region spanning 5735 to 5904 is the (+)RNA virus helicase C-terminal domain; that stretch reads GTCYRCPKEI…VETRVQCSTN (170 aa). In terms of domain architecture, ExoN spans 5971–6186; sequence LFITKEEAVK…RCLAVYDCFC (216 aa). Residues D5989, E5991, and E6090 contribute to the active site. C6106, C6109, C6125, H6128, H6156, C6160, and H6163 together coordinate Zn(2+). Active-site residues include H6167 and D6172. Position 6178 (C6178) interacts with Zn(2+). One can recognise an N7-MTase domain in the interval 6195 to 6421; the sequence is YPIISNELSI…NLWNTFTKLQ (227 aa). 6230–6236 is an S-adenosyl-L-methionine binding site; that stretch reads DIGNPKA. A gpppA-binding region spans residues 6308 to 6322; that stretch reads CNGGSLYVNKHAFHT. Zn(2+) is bound by residues C6346, C6367, C6378, and H6381. The region spanning 6422–6482 is the Nsp15 N-terminal oligomerization domain; it reads SLENVVYNLV…NVAVELFAKR (61 aa). The AV-Nsp11N/CoV-Nsp15M domain occupies 6483 to 6603; sequence SIRHHPELKL…FAVRKEGQDV (121 aa). Positions 6653–6792 constitute a NendoU domain; it reads TCRTDMEKDF…NDEKVMTFYP (140 aa). Catalysis depends on residues H6683, H6698, K6738, K6841, D6925, K6965, and E6998. The Nidovirus-type SAM-dependent 2'-O-MTase domain occupies 6797–7091; the sequence is ASDWKPGYSM…KEVFVGDSLV (295 aa).

Belongs to the coronaviruses polyprotein 1ab family. In terms of assembly, interacts with host PHB and PHB2. As to quaternary structure, interacts with papain-like protease nsp3 and non-structural protein 6. Monomer. Homodimer. Only the homodimer shows catalytic activity. In terms of assembly, interacts with nsp8 and nsp12 to form the replication-transcription complex (RTC): nsp12, nsp7, two subunits of nsp8, and up to two subunits of nsp13. As to quaternary structure, interacts with nsp7, nsp13 and nsp12 to form the replication-transcription complex (RTC): nsp12, nsp7, two subunits of nsp8, and up to two subunits of nsp13. Interacts with nsp12. In terms of assembly, interacts with proofreading exoribonuclease nsp14 and 2'-O-methyltransferase nsp16; these interactions enhance nsp14 and nsp16 enzymatic activities. As to quaternary structure, interacts with nsp7 and nsp8 to form the replication-transcription complex (RTC): nsp12, nsp7, two subunits of nsp8, and up to two subunits of nsp13. Interacts with nsp9. Interacts with nsp8 to form the replication-transcription complex (RTC): nsp12, nsp7, two subunits of nsp8, and up to two subunits of nsp13. Mn(2+) is required as a cofactor. It depends on Mg(2+) as a cofactor. Post-translationally, specific enzymatic cleavages in vivo by its own proteases yield mature proteins. 3CL-PRO and PL-PRO proteinases are autocatalytically processed.

Its subcellular location is the host membrane. The protein resides in the host cytoplasm. It is found in the host perinuclear region. It localises to the host endoplasmic reticulum-Golgi intermediate compartment. The enzyme catalyses RNA(n) + a ribonucleoside 5'-triphosphate = RNA(n+1) + diphosphate. It carries out the reaction ATP + H2O = ADP + phosphate + H(+). The catalysed reaction is Thiol-dependent hydrolysis of ester, thioester, amide, peptide and isopeptide bonds formed by the C-terminal Gly of ubiquitin (a 76-residue protein attached to proteins as an intracellular targeting signal).. It catalyses the reaction a 5'-end (N(7)-methyl 5'-triphosphoguanosine)-ribonucleoside in mRNA + S-adenosyl-L-methionine = a 5'-end (N(7)-methyl 5'-triphosphoguanosine)-(2'-O-methyl-ribonucleoside) in mRNA + S-adenosyl-L-homocysteine + H(+). The enzyme catalyses uridylyl-uridylyl-ribonucleotide-RNA = a 3'-end uridylyl-2',3'-cyclophospho-uridine-RNA + a 5'-end dephospho-ribonucleoside-RNA. It carries out the reaction a 5'-end diphospho-ribonucleoside in mRNA + GTP + H(+) = a 5'-end (5'-triphosphoguanosine)-ribonucleoside in mRNA + diphosphate. The catalysed reaction is a 5'-end (5'-triphosphoguanosine)-ribonucleoside in mRNA + S-adenosyl-L-methionine = a 5'-end (N(7)-methyl 5'-triphosphoguanosine)-ribonucleoside in mRNA + S-adenosyl-L-homocysteine. The replicase polyprotein of coronaviruses is a multifunctional protein: it contains the activities necessary for the transcription of negative stranded RNA, leader RNA, subgenomic mRNAs and progeny virion RNA as well as proteinases responsible for the cleavage of the polyprotein into functional products. Its function is as follows. Inhibits host translation by interacting with the 40S ribosomal subunit. The nsp1-40S ribosome complex further induces an endonucleolytic cleavage near the 5'UTR of host mRNAs, targeting them for degradation. Viral mRNAs are not susceptible to nsp1-mediated endonucleolytic RNA cleavage thanks to the presence of a 5'-end leader sequence and are therefore protected from degradation. By suppressing host gene expression, nsp1 facilitates efficient viral gene expression in infected cells and evasion from host immune response. Functionally, may play a role in the modulation of host cell survival signaling pathway by interacting with host PHB and PHB2. Indeed, these two proteins play a role in maintaining the functional integrity of the mitochondria and protecting cells from various stresses. In terms of biological role, responsible for the cleavages located at the N-terminus of the replicase polyprotein. In addition, PL-PRO possesses a deubiquitinating/deISGylating activity and processes both 'Lys-48'- and 'Lys-63'-linked polyubiquitin chains from cellular substrates. Participates together with nsp4 in the assembly of virally-induced cytoplasmic double-membrane vesicles necessary for viral replication. Antagonizes innate immune induction of type I interferon by blocking the phosphorylation, dimerization and subsequent nuclear translocation of host IRF3. Also prevents host NF-kappa-B signaling. Participates in the assembly of virally-induced cytoplasmic double-membrane vesicles necessary for viral replication. Its function is as follows. Cleaves the C-terminus of replicase polyprotein at 11 sites. Recognizes substrates containing the core sequence [ILMVF]-Q-|-[SGACN]. Also able to bind an ADP-ribose-1''-phosphate (ADRP). Functionally, plays a role in the initial induction of autophagosomes from host endoplasmic reticulum. Later, limits the expansion of these phagosomes that are no longer able to deliver viral components to lysosomes. In terms of biological role, forms a hexadecamer with nsp8 (8 subunits of each) that may participate in viral replication by acting as a primase. Alternatively, may synthesize substantially longer products than oligonucleotide primers. Forms a hexadecamer with nsp7 (8 subunits of each) that may participate in viral replication by acting as a primase. Alternatively, may synthesize substantially longer products than oligonucleotide primers. Its function is as follows. Forms a primer, NSP9-pU, which is utilized by the polymerase for the initiation of RNA chains. Interacts with ribosome signal recognition particle RNA (SRP). Together with NSP8, suppress protein integration into the cell membrane, thereby disrupting host immune defenses. Functionally, plays a pivotal role in viral transcription by stimulating both nsp14 3'-5' exoribonuclease and nsp16 2'-O-methyltransferase activities. Therefore plays an essential role in viral mRNAs cap methylation. In terms of biological role, RNA-directed RNA polymerase that catalyzes the transcription of viral genomic and subgenomic RNAs. Acts in complex with nsp7 and nsp8 to transcribe both the minus and positive strands of genomic RNA. The kinase-like NiRAN domain of NSP12 attaches one or more nucleotides to the amino terminus of NSP9, forming a covalent RNA-protein intermediate that serves as transcription/replication primer. Subgenomic RNAs (sgRNAs) are formed by discontinuous transcription: The polymerase has the ability to pause at transcription-regulating sequences (TRS) and jump to the leader TRS, resulting in a major deletion. This creates a series of subgenomic RNAs that are replicated, transcribed and translated. In addition, Nsp12 is a subunit of the viral RNA capping enzyme that catalyzes the RNA guanylyltransferase reaction for genomic and sub-genomic RNAs. Subsequently, the NiRAN domain transfers RNA to GDP, and forms the core cap structure GpppA-RNA. Multi-functional protein with a zinc-binding domain in N-terminus displaying RNA and DNA duplex-unwinding activities with 5' to 3' polarity. Activity of helicase is dependent on magnesium. Its function is as follows. Plays a role in viral RNA synthesis through two distinct activities. The N7-guanine methyltransferase activity plays a role in the formation of the cap structure GpppA-RNA. The proofreading exoribonuclease reduces the sensitivity of the virus to RNA mutagens during replication. This activity acts on both ssRNA and dsRNA in a 3'-5' direction. Functionally, plays a role in viral transcription/replication and prevents the simultaneous activation of host cell dsRNA sensors, such as MDA5/IFIH1, OAS, and PKR. Acts by degrading the 5'-polyuridines generated during replication of the poly(A) region of viral genomic and subgenomic RNAs. Catalyzes a two-step reaction in which a 2'3'-cyclic phosphate (2'3'-cP) is first generated by 2'-O transesterification, which is then hydrolyzed to a 3'-phosphate (3'-P). If not degraded, poly(U) RNA would hybridize with poly(A) RNA tails and activate host dsRNA sensors. In terms of biological role, methyltransferase that mediates mRNA cap 2'-O-ribose methylation to the 5'-cap structure of viral mRNAs. N7-methyl guanosine cap is a prerequisite for binding of nsp16. Therefore plays an essential role in viral mRNAs cap methylation which is essential to evade immune system. This is Replicase polyprotein 1ab (rep) from Bos taurus (Bovine).